We begin with the raw amino-acid sequence, 1052 residues long: Swarming motility protein SwrC (1052 aa).

Belongs to the resistance-nodulation-cell division (RND) (TC 2.A.6) family.

In terms of biological role, required for self-resistance to surfactin, an antimicrobial lipopeptide surfactant produced by B.subtilis. Also required for swarming motility. In Bacillus subtilis (strain 168), this protein is Swarming motility protein SwrC (swrC).